A 271-amino-acid chain; its full sequence is Eukaryotic translation initiation factor 3 subunit G (271 aa).

3 disordered regions span residues 1 to 26 (MSTTVIGSWADAGDEFSAPDITTNPD), 63 to 119 (AQRK…AQKL), and 147 to 187 (TTSS…RDDS). Position 77 is a phosphoserine (S77). Positions 188–267 (TTLKVSQLNS…LILHLEWSKK (80 aa)) constitute an RRM domain.

Belongs to the eIF-3 subunit G family. As to quaternary structure, component of the eukaryotic translation initiation factor 3 (eIF-3) complex.

The protein resides in the cytoplasm. In terms of biological role, RNA-binding component of the eukaryotic translation initiation factor 3 (eIF-3) complex, which is involved in protein synthesis of a specialized repertoire of mRNAs and, together with other initiation factors, stimulates binding of mRNA and methionyl-tRNAi to the 40S ribosome. The eIF-3 complex specifically targets and initiates translation of a subset of mRNAs involved in cell proliferation. This subunit can bind 18S rRNA. The sequence is that of Eukaryotic translation initiation factor 3 subunit G from Scheffersomyces stipitis (strain ATCC 58785 / CBS 6054 / NBRC 10063 / NRRL Y-11545) (Yeast).